The chain runs to 284 residues: MDRTATASWEVMSRRGEQQQQLMMQAPASHNGGSGGGEPARSRWAPKPEQILILESIFNSGMVNPAKDETARIRRLLERFGAVRDANVFYWFQNRRSRSRRRARQLQQACGAALHQLPSAAAAAGAGGGGDYYHHHHQPSSSPFLMHGGGGGGVVTSTTAAPAVAASGHFLADEVDGGGDDDLFAISRQMGLMARHGGGDHHYSSYADSDATQLSYQPTGTIQVFINGVAYDVPSGGALDMAGTFGRDAMLVHSSGEVLPVDEHGVLINSLQMGECYYLVSKSI.

The disordered stretch occupies residues 1–43 (MDRTATASWEVMSRRGEQQQQLMMQAPASHNGGSGGGEPARSR). The segment at residues 39 to 103 (PARSRWAPKP…NRRSRSRRRA (65 aa)) is a DNA-binding region (homeobox; WUS-type).

Belongs to the WUS homeobox family.

The protein localises to the nucleus. Transcription factor which may be involved in developmental processes. This is WUSCHEL-related homeobox 10 (WOX10) from Oryza sativa subsp. japonica (Rice).